Consider the following 143-residue polypeptide: Large ribosomal subunit protein uL11 (143 aa).

This sequence belongs to the universal ribosomal protein uL11 family. As to quaternary structure, part of the ribosomal stalk of the 50S ribosomal subunit. Interacts with L10 and the large rRNA to form the base of the stalk. L10 forms an elongated spine to which L12 dimers bind in a sequential fashion forming a multimeric L10(L12)X complex. In terms of processing, one or more lysine residues are methylated.

Functionally, forms part of the ribosomal stalk which helps the ribosome interact with GTP-bound translation factors. The polypeptide is Large ribosomal subunit protein uL11 (Borrelia garinii subsp. bavariensis (strain ATCC BAA-2496 / DSM 23469 / PBi) (Borreliella bavariensis)).